We begin with the raw amino-acid sequence, 122 residues long: Putative TLX1 neighbor protein (122 aa).

The interval 21–122 (SLLSQEAMGP…LGGGRGQRGQ (102 aa)) is disordered. Positions 113 to 122 (LGGGRGQRGQ) are enriched in gly residues.

In Homo sapiens (Human), this protein is Putative TLX1 neighbor protein (TLX1NB).